A 390-amino-acid chain; its full sequence is Acid protease (390 aa).

The N-terminal stretch at 1–18 (MLFSKSLLLSVLASLSFA) is a signal peptide. A Peptidase A1 domain is found at 75-386 (YLTTIEIGTP…DIDNSQVGIA (312 aa)). Catalysis depends on residues Asp-93 and Asp-282.

This sequence belongs to the peptidase A1 family.

This Saccharomycopsis fibuligera (Yeast) protein is Acid protease (PEP1).